A 362-amino-acid chain; its full sequence is Cobalt-precorrin-5B C(1)-methyltransferase (362 aa).

It belongs to the CbiD family.

The enzyme catalyses Co-precorrin-5B + S-adenosyl-L-methionine = Co-precorrin-6A + S-adenosyl-L-homocysteine. It functions in the pathway cofactor biosynthesis; adenosylcobalamin biosynthesis; cob(II)yrinate a,c-diamide from sirohydrochlorin (anaerobic route): step 6/10. Its function is as follows. Catalyzes the methylation of C-1 in cobalt-precorrin-5B to form cobalt-precorrin-6A. In Geobacter sulfurreducens (strain ATCC 51573 / DSM 12127 / PCA), this protein is Cobalt-precorrin-5B C(1)-methyltransferase.